Consider the following 300-residue polypeptide: Geranylgeranyl pyrophosphate synthase (300 aa).

N-acetylmethionine is present on M1. 3 residues coordinate isopentenyl diphosphate: K25, R28, and H57. Positions 64 and 68 each coordinate Mg(2+). R73 serves as a coordination point for dimethylallyl diphosphate. R74 serves as a coordination point for isopentenyl diphosphate. Positions 151, 152, 185, 202, and 212 each coordinate dimethylallyl diphosphate.

The protein belongs to the FPP/GGPP synthase family. Homohexamer; trimer of homodimers. Requires Mg(2+) as cofactor. Abundantly expressed in testis. Found in other tissues to a lower extent. Expressed in dermal fibroblast and skeletal muscle.

Its subcellular location is the cytoplasm. The protein resides in the perinuclear region. It localises to the myofibril. The protein localises to the sarcomere. It is found in the z line. It carries out the reaction isopentenyl diphosphate + dimethylallyl diphosphate = (2E)-geranyl diphosphate + diphosphate. The catalysed reaction is isopentenyl diphosphate + (2E)-geranyl diphosphate = (2E,6E)-farnesyl diphosphate + diphosphate. It catalyses the reaction isopentenyl diphosphate + (2E,6E)-farnesyl diphosphate = (2E,6E,10E)-geranylgeranyl diphosphate + diphosphate. It functions in the pathway isoprenoid biosynthesis; farnesyl diphosphate biosynthesis; farnesyl diphosphate from geranyl diphosphate and isopentenyl diphosphate: step 1/1. Its pathway is isoprenoid biosynthesis; geranyl diphosphate biosynthesis; geranyl diphosphate from dimethylallyl diphosphate and isopentenyl diphosphate: step 1/1. It participates in isoprenoid biosynthesis; geranylgeranyl diphosphate biosynthesis; geranylgeranyl diphosphate from farnesyl diphosphate and isopentenyl diphosphate: step 1/1. Subject to product inhibition by geranylgeranyl diphosphate. Functionally, catalyzes the trans-addition of the three molecules of IPP onto DMAPP to form geranylgeranyl pyrophosphate, an important precursor of carotenoids and geranylated proteins. This is Geranylgeranyl pyrophosphate synthase (GGPS1) from Homo sapiens (Human).